Consider the following 161-residue polypeptide: Nucleotide-binding protein BMASAVP1_A0673 (161 aa).

The protein belongs to the YajQ family.

Functionally, nucleotide-binding protein. The polypeptide is Nucleotide-binding protein BMASAVP1_A0673 (Burkholderia mallei (strain SAVP1)).